We begin with the raw amino-acid sequence, 261 residues long: Phosphatidylglycerol--prolipoprotein diacylglyceryl transferase (261 aa).

The next 7 membrane-spanning stretches (helical) occupy residues 19–39 (VHWY…LALY), 56–76 (LIFY…MLFY), 92–112 (WRGG…TWIF), 126–146 (FVVP…FING), 173–193 (QLYE…WFSA), 199–219 (FAVS…AEFF), and 227–247 (GFVA…MIII). Residue arginine 139 participates in a 1,2-diacyl-sn-glycero-3-phospho-(1'-sn-glycerol) binding.

It belongs to the Lgt family.

The protein resides in the cell inner membrane. The catalysed reaction is L-cysteinyl-[prolipoprotein] + a 1,2-diacyl-sn-glycero-3-phospho-(1'-sn-glycerol) = an S-1,2-diacyl-sn-glyceryl-L-cysteinyl-[prolipoprotein] + sn-glycerol 1-phosphate + H(+). Its pathway is protein modification; lipoprotein biosynthesis (diacylglyceryl transfer). Its function is as follows. Catalyzes the transfer of the diacylglyceryl group from phosphatidylglycerol to the sulfhydryl group of the N-terminal cysteine of a prolipoprotein, the first step in the formation of mature lipoproteins. The polypeptide is Phosphatidylglycerol--prolipoprotein diacylglyceryl transferase (Coxiella burnetii (strain Dugway 5J108-111)).